The sequence spans 320 residues: uncharacterized protein (320 aa).

This is an uncharacterized protein from Orgyia pseudotsugata (Douglas-fir tussock moth).